A 187-amino-acid polypeptide reads, in one-letter code: Protein McbG (187 aa).

This sequence belongs to the pentapeptide repeat protein family.

Its function is as follows. Together with proteins McbE and McbF this protein causes immunity to the peptide antibiotic microcin B17 (MccB17), which inhibits DNA replication in Enterobacteriaceae by induction of the SOS repair system. McbG alone can provide some protection. This chain is Protein McbG (mcbG), found in Escherichia coli.